A 245-amino-acid chain; its full sequence is 5-oxoprolinase subunit A (245 aa).

This sequence belongs to the LamB/PxpA family. In terms of assembly, forms a complex composed of PxpA, PxpB and PxpC.

It catalyses the reaction 5-oxo-L-proline + ATP + 2 H2O = L-glutamate + ADP + phosphate + H(+). Its function is as follows. Catalyzes the cleavage of 5-oxoproline to form L-glutamate coupled to the hydrolysis of ATP to ADP and inorganic phosphate. In Yersinia pseudotuberculosis serotype O:1b (strain IP 31758), this protein is 5-oxoprolinase subunit A.